The following is a 287-amino-acid chain: Prepilin leader peptidase/N-methyltransferase (287 aa).

A helical transmembrane segment spans residues 12-32 (FMYLVVGLFSLAVGSLLNVII). Cys71, Cys74, Cys96, and Cys99 together coordinate Zn(2+). The next 5 membrane-spanning stretches (helical) occupy residues 127–147 (FTIQ…LVFI), 158–178 (LTLG…FVSL), 182–202 (VLSC…FYLM), 215–235 (LFAA…LLIS), and 259–279 (PFGP…DSII).

This sequence belongs to the peptidase A24 family. It depends on Zn(2+) as a cofactor.

It is found in the cell inner membrane. The catalysed reaction is Typically cleaves a -Gly-|-Phe- bond to release an N-terminal, basic peptide of 5-8 residues from type IV prepilin, and then N-methylates the new N-terminal amino group, the methyl donor being S-adenosyl-L-methionine.. Functionally, plays an essential role in type IV pili and type II pseudopili formation by proteolytically removing the leader sequence from substrate proteins and subsequently monomethylating the alpha-amino group of the newly exposed N-terminal phenylalanine. The protein is Prepilin leader peptidase/N-methyltransferase (pilD) of Legionella pneumophila.